The chain runs to 213 residues: Phosphatidylserine decarboxylase proenzyme (213 aa).

The active-site Schiff-base intermediate with substrate; via pyruvic acid is the Ser182. Ser182 is subject to Pyruvic acid (Ser); by autocatalysis.

Belongs to the phosphatidylserine decarboxylase family. PSD-A subfamily. Heterodimer of a large membrane-associated beta subunit and a small pyruvoyl-containing alpha subunit. Pyruvate is required as a cofactor. Is synthesized initially as an inactive proenzyme. Formation of the active enzyme involves a self-maturation process in which the active site pyruvoyl group is generated from an internal serine residue via an autocatalytic post-translational modification. Two non-identical subunits are generated from the proenzyme in this reaction, and the pyruvate is formed at the N-terminus of the alpha chain, which is derived from the carboxyl end of the proenzyme. The post-translation cleavage follows an unusual pathway, termed non-hydrolytic serinolysis, in which the side chain hydroxyl group of the serine supplies its oxygen atom to form the C-terminus of the beta chain, while the remainder of the serine residue undergoes an oxidative deamination to produce ammonia and the pyruvoyl prosthetic group on the alpha chain.

Its subcellular location is the cell membrane. It carries out the reaction a 1,2-diacyl-sn-glycero-3-phospho-L-serine + H(+) = a 1,2-diacyl-sn-glycero-3-phosphoethanolamine + CO2. Its pathway is phospholipid metabolism; phosphatidylethanolamine biosynthesis; phosphatidylethanolamine from CDP-diacylglycerol: step 2/2. In terms of biological role, catalyzes the formation of phosphatidylethanolamine (PtdEtn) from phosphatidylserine (PtdSer). This chain is Phosphatidylserine decarboxylase proenzyme, found in Geotalea uraniireducens (strain Rf4) (Geobacter uraniireducens).